The following is a 418-amino-acid chain: UDP-N-acetyl-D-mannosamine dehydrogenase (418 aa).

Tyr10, Ile11, Asp30, Thr85, and Thr119 together coordinate NAD(+). Arg152, Val153, Lys204, Asn208, Arg211, His242, Arg244, Thr249, and Gly255 together coordinate UDP-N-acetyl-alpha-D-mannosaminouronate. Lys204 acts as the Proton donor/acceptor in catalysis. The Nucleophile role is filled by Cys258. An NAD(+)-binding site is contributed by Lys261. UDP-N-acetyl-alpha-D-mannosaminouronate contacts are provided by Tyr318 and Lys319. Residue Arg326 coordinates NAD(+). Arg398 contacts UDP-N-acetyl-alpha-D-mannosaminouronate.

It belongs to the UDP-glucose/GDP-mannose dehydrogenase family. In terms of assembly, homodimer.

The enzyme catalyses UDP-N-acetyl-alpha-D-mannosamine + 2 NAD(+) + H2O = UDP-N-acetyl-alpha-D-mannosaminouronate + 2 NADH + 3 H(+). Its function is as follows. Catalyzes the four-electron oxidation of UDP-N-acetyl-D-mannosamine (UDP-ManNAc), reducing NAD(+) and releasing UDP-N-acetylmannosaminuronic acid (UDP-ManNAcA). This chain is UDP-N-acetyl-D-mannosamine dehydrogenase, found in Pyrococcus horikoshii (strain ATCC 700860 / DSM 12428 / JCM 9974 / NBRC 100139 / OT-3).